A 302-amino-acid polypeptide reads, in one-letter code: Catechol 1,2-dioxygenase (302 aa).

Y164, Y198, H222, and H224 together coordinate Fe cation.

Belongs to the intradiol ring-cleavage dioxygenase family. Fe(3+) serves as cofactor.

The enzyme catalyses catechol + O2 = cis,cis-muconate + 2 H(+). It participates in aromatic compound metabolism; beta-ketoadipate pathway; 5-oxo-4,5-dihydro-2-furylacetate from catechol: step 1/3. The chain is Catechol 1,2-dioxygenase (pheB) from Pseudomonas sp. (strain EST1001).